Reading from the N-terminus, the 272-residue chain is Glutamate racemase (272 aa).

Substrate contacts are provided by residues 12-13 (DS) and 44-45 (YG). Residue Cys-75 is the Proton donor/acceptor of the active site. 76–77 (NT) contacts substrate. Cys-185 functions as the Proton donor/acceptor in the catalytic mechanism. 186-187 (TH) contacts substrate.

This sequence belongs to the aspartate/glutamate racemases family.

The catalysed reaction is L-glutamate = D-glutamate. It participates in cell wall biogenesis; peptidoglycan biosynthesis. In terms of biological role, provides the (R)-glutamate required for cell wall biosynthesis. The protein is Glutamate racemase of Mycobacterium leprae (strain TN).